The chain runs to 179 residues: Large ribosomal subunit protein uL5 (179 aa).

Belongs to the universal ribosomal protein uL5 family. In terms of assembly, part of the 50S ribosomal subunit; part of the 5S rRNA/L5/L18/L25 subcomplex. Contacts the 5S rRNA and the P site tRNA. Forms a bridge to the 30S subunit in the 70S ribosome.

Its function is as follows. This is one of the proteins that bind and probably mediate the attachment of the 5S RNA into the large ribosomal subunit, where it forms part of the central protuberance. In the 70S ribosome it contacts protein S13 of the 30S subunit (bridge B1b), connecting the 2 subunits; this bridge is implicated in subunit movement. Contacts the P site tRNA; the 5S rRNA and some of its associated proteins might help stabilize positioning of ribosome-bound tRNAs. This is Large ribosomal subunit protein uL5 from Staphylococcus aureus (strain MW2).